Here is a 367-residue protein sequence, read N- to C-terminus: Chorismate synthase (367 aa).

Residue Arg-48 participates in NADP(+) binding. FMN is bound by residues 125–127, 243–244, Gly-283, 298–302, and Arg-324; these read RSS, NA, and KPTSS.

This sequence belongs to the chorismate synthase family. In terms of assembly, homotetramer. FMNH2 is required as a cofactor.

It carries out the reaction 5-O-(1-carboxyvinyl)-3-phosphoshikimate = chorismate + phosphate. It participates in metabolic intermediate biosynthesis; chorismate biosynthesis; chorismate from D-erythrose 4-phosphate and phosphoenolpyruvate: step 7/7. Catalyzes the anti-1,4-elimination of the C-3 phosphate and the C-6 proR hydrogen from 5-enolpyruvylshikimate-3-phosphate (EPSP) to yield chorismate, which is the branch point compound that serves as the starting substrate for the three terminal pathways of aromatic amino acid biosynthesis. This reaction introduces a second double bond into the aromatic ring system. In Psychrobacter arcticus (strain DSM 17307 / VKM B-2377 / 273-4), this protein is Chorismate synthase.